Here is a 396-residue protein sequence, read N- to C-terminus: S-adenosylmethionine synthase (396 aa).

Histidine 15 serves as a coordination point for ATP. Position 17 (aspartate 17) interacts with Mg(2+). Glutamate 43 is a binding site for K(+). Residues glutamate 56 and glutamine 99 each contribute to the L-methionine site. The tract at residues 99–109 (QSADIALGVDR) is flexible loop. ATP is bound by residues 175–177 (DGK), 241–242 (RF), aspartate 250, 256–257 (RK), alanine 273, and lysine 277. Residue aspartate 250 coordinates L-methionine. Residue lysine 281 coordinates L-methionine.

This sequence belongs to the AdoMet synthase family. In terms of assembly, homotetramer; dimer of dimers. The cofactor is Mg(2+). K(+) is required as a cofactor.

The protein resides in the cytoplasm. It catalyses the reaction L-methionine + ATP + H2O = S-adenosyl-L-methionine + phosphate + diphosphate. It functions in the pathway amino-acid biosynthesis; S-adenosyl-L-methionine biosynthesis; S-adenosyl-L-methionine from L-methionine: step 1/1. In terms of biological role, catalyzes the formation of S-adenosylmethionine (AdoMet) from methionine and ATP. The overall synthetic reaction is composed of two sequential steps, AdoMet formation and the subsequent tripolyphosphate hydrolysis which occurs prior to release of AdoMet from the enzyme. This chain is S-adenosylmethionine synthase, found in Desulfitobacterium hafniense (strain DSM 10664 / DCB-2).